Consider the following 1068-residue polypeptide: Huntingtin-interacting protein 1-related protein (1068 aa).

M1 bears the N-acetylmethionine mark. The ENTH domain maps to 23–151; sequence EREQFDKTQA…SFHLKHPQFP (129 aa). The stretch at 347 to 599 forms a coiled coil; it reads SVKDDRDLQI…RSSQEQGELQ (253 aa). Disordered stretches follow at residues 424-443, 529-549, and 582-608; these read LEGE…ASAT, ARAQ…SSRL, and AALS…RESQ. Basic and acidic residues-rich tracts occupy residues 425–443 and 539–549; these read EGER…ASAT and EQSKSELSSRL. Over residues 590-600 the composition is skewed to low complexity; that stretch reads RSSQEQGELQG. Residues 771–1012 form the I/LWEQ domain; that stretch reads SLDVRQEELG…ELRKQHYVLA (242 aa). The interval 867-924 is important for actin binding; the sequence is RWTEGLISASKAVGWGATQLVEAADKVVLHTGKYEELIVCSHEIAASTAQLVAASKVK. A disordered region spans residues 1016–1060; the sequence is GSPGEEVAIRPSTAPRSVTTKKPPLAQKPSVAPRQDHQLDKKDGI. S1017 is subject to Phosphoserine. Positions 1049-1059 are enriched in basic and acidic residues; it reads RQDHQLDKKDG.

It belongs to the SLA2 family. In terms of assembly, homodimer. Interacts with actin; homodimerization promotes actin binding. Interacts with CLTB. Interacts with HIP1. Interacts (via ENTH and I/LWEQ domains) with BCL2L10. As to expression, brain, heart, kidney, pancreas, and liver, but not in lung or placenta.

The protein localises to the cytoplasm. Its subcellular location is the perinuclear region. The protein resides in the endomembrane system. It is found in the cytoplasmic vesicle. It localises to the clathrin-coated vesicle membrane. Component of clathrin-coated pits and vesicles, that may link the endocytic machinery to the actin cytoskeleton. Binds 3-phosphoinositides (via ENTH domain). May act through the ENTH domain to promote cell survival by stabilizing receptor tyrosine kinases following ligand-induced endocytosis. The protein is Huntingtin-interacting protein 1-related protein (HIP1R) of Homo sapiens (Human).